The chain runs to 898 residues: Alanine--tRNA ligase (898 aa).

The Zn(2+) site is built by histidine 582, histidine 586, cysteine 685, and histidine 689.

The protein belongs to the class-II aminoacyl-tRNA synthetase family. The cofactor is Zn(2+).

It localises to the cytoplasm. The catalysed reaction is tRNA(Ala) + L-alanine + ATP = L-alanyl-tRNA(Ala) + AMP + diphosphate. In terms of biological role, catalyzes the attachment of alanine to tRNA(Ala) in a two-step reaction: alanine is first activated by ATP to form Ala-AMP and then transferred to the acceptor end of tRNA(Ala). Also edits incorrectly charged Ser-tRNA(Ala) and Gly-tRNA(Ala) via its editing domain. The sequence is that of Alanine--tRNA ligase from Mycolicibacterium vanbaalenii (strain DSM 7251 / JCM 13017 / BCRC 16820 / KCTC 9966 / NRRL B-24157 / PYR-1) (Mycobacterium vanbaalenii).